We begin with the raw amino-acid sequence, 494 residues long: Aspartyl/glutamyl-tRNA(Asn/Gln) amidotransferase subunit B (494 aa).

Belongs to the GatB/GatE family. GatB subfamily. Heterotrimer of A, B and C subunits.

The catalysed reaction is L-glutamyl-tRNA(Gln) + L-glutamine + ATP + H2O = L-glutaminyl-tRNA(Gln) + L-glutamate + ADP + phosphate + H(+). It carries out the reaction L-aspartyl-tRNA(Asn) + L-glutamine + ATP + H2O = L-asparaginyl-tRNA(Asn) + L-glutamate + ADP + phosphate + 2 H(+). Functionally, allows the formation of correctly charged Asn-tRNA(Asn) or Gln-tRNA(Gln) through the transamidation of misacylated Asp-tRNA(Asn) or Glu-tRNA(Gln) in organisms which lack either or both of asparaginyl-tRNA or glutaminyl-tRNA synthetases. The reaction takes place in the presence of glutamine and ATP through an activated phospho-Asp-tRNA(Asn) or phospho-Glu-tRNA(Gln). The sequence is that of Aspartyl/glutamyl-tRNA(Asn/Gln) amidotransferase subunit B from Synechococcus sp. (strain CC9902).